A 461-amino-acid chain; its full sequence is Putative forkhead-related transcription factor fkh-5 (461 aa).

The segment at residues 171–262 is a DNA-binding region (fork-head); that stretch reads QRPQLSYQLL…VEKEMIDVKT (92 aa).

It is found in the nucleus. Functionally, transcription factor. Binds to DNA sequence motif 5'-CTGTTTCA-3'. Regulates expression of a class of small RNAs, known as 21U-RNAs, perhaps acting redundantly with fkh-4 and fkh-3. The polypeptide is Putative forkhead-related transcription factor fkh-5 (fkh-5) (Caenorhabditis elegans).